A 423-amino-acid polypeptide reads, in one-letter code: Histidine--tRNA ligase (423 aa).

Belongs to the class-II aminoacyl-tRNA synthetase family. Homodimer.

It localises to the cytoplasm. It carries out the reaction tRNA(His) + L-histidine + ATP = L-histidyl-tRNA(His) + AMP + diphosphate + H(+). In Shewanella loihica (strain ATCC BAA-1088 / PV-4), this protein is Histidine--tRNA ligase.